The chain runs to 77 residues: Acyl carrier protein (77 aa).

The 76-residue stretch at 2 to 77 (SDIADRVKKI…DAVKFISDAS (76 aa)) folds into the Carrier domain. Serine 37 carries the O-(pantetheine 4'-phosphoryl)serine modification.

The protein belongs to the acyl carrier protein (ACP) family. 4'-phosphopantetheine is transferred from CoA to a specific serine of apo-ACP by AcpS. This modification is essential for activity because fatty acids are bound in thioester linkage to the sulfhydryl of the prosthetic group.

It is found in the cytoplasm. The protein operates within lipid metabolism; fatty acid biosynthesis. In terms of biological role, carrier of the growing fatty acid chain in fatty acid biosynthesis. The protein is Acyl carrier protein of Roseobacter denitrificans (strain ATCC 33942 / OCh 114) (Erythrobacter sp. (strain OCh 114)).